The following is a 407-amino-acid chain: 5-aminolevulinate synthase 2 (407 aa).

Positions 21 and 137 each coordinate substrate. 3 residues coordinate pyridoxal 5'-phosphate: serine 189, histidine 217, and threonine 245. Residue lysine 248 is part of the active site. Residue lysine 248 is modified to N6-(pyridoxal phosphate)lysine. Residues threonine 277 and threonine 278 each contribute to the pyridoxal 5'-phosphate site. Substrate is bound at residue threonine 363.

The protein belongs to the class-II pyridoxal-phosphate-dependent aminotransferase family. As to quaternary structure, homodimer. Pyridoxal 5'-phosphate is required as a cofactor.

It carries out the reaction succinyl-CoA + glycine + H(+) = 5-aminolevulinate + CO2 + CoA. It functions in the pathway porphyrin-containing compound metabolism; protoporphyrin-IX biosynthesis; 5-aminolevulinate from glycine: step 1/1. This is 5-aminolevulinate synthase 2 (hemT) from Cereibacter sphaeroides (strain ATCC 17023 / DSM 158 / JCM 6121 / CCUG 31486 / LMG 2827 / NBRC 12203 / NCIMB 8253 / ATH 2.4.1.) (Rhodobacter sphaeroides).